We begin with the raw amino-acid sequence, 376 residues long: Cellular tumor antigen p53 (376 aa).

The segment at 1–36 is transcription activation (acidic); that stretch reads MEGNGERDTMMVEPPDSQEFAELWLRNLIVRDNSLW. Residues 77-268 mediate DNA binding; it reads DYPGLLNFTL…KTEESNFKKQ (192 aa). Residues 150–159 show a composition bias toward basic and acidic residues; sequence RCPHHERSND. The interval 150–171 is disordered; sequence RCPHHERSNDSSDGPAPPGHLL. Residues Cys151, His154, Cys214, and Cys218 each contribute to the Zn(2+) site. Residues 249-256 form an interaction with DNA region; that stretch reads RVCACPGR. 2 stretches are compositionally biased toward basic and acidic residues: residues 257–270 and 282–294; these read DRKT…KQQE and SMKD…EASK. Positions 257 to 306 are disordered; it reads DRKTEESNFKKQQEPKTSGKTLTKRSMKDPPSHPEASKKSKNSSSDDEIY. The Bipartite nuclear localization signal motif lies at 280–297; it reads KRSMKDPPSHPEASKKSK. The tract at residues 303–334 is oligomerization; the sequence is DEIYTLQVRGKERYEFLKKINDGLELSDVVPP. The short motif at 317–328 is the Nuclear export signal element; it reads EFLKKINDGLEL. The interval 342–376 is disordered; sequence QKLLSKTCRKERDGAAGEPKRGKKRLVKEEKCDSD. The tract at residues 347–372 is basic (repression of DNA-binding); the sequence is KTCRKERDGAAGEPKRGKKRLVKEEK. The segment covering 349–361 has biased composition (basic and acidic residues); the sequence is CRKERDGAAGEPK.

It belongs to the p53 family. Binds DNA as a homotetramer. The cofactor is Zn(2+).

The protein localises to the cytoplasm. Its subcellular location is the nucleus. Multifunctional transcription factor that induces cell cycle arrest, DNA repair or apoptosis upon binding to its target DNA sequence. Acts as a tumor suppressor in many tumor types; induces growth arrest or apoptosis depending on the physiological circumstances and cell type. Negatively regulates cell division by controlling expression of a set of genes required for this process. One of the activated genes is an inhibitor of cyclin-dependent kinases. Apoptosis induction seems to be mediated either by stimulation of BAX and FAS antigen expression, or by repression of Bcl-2 expression. This Ictalurus punctatus (Channel catfish) protein is Cellular tumor antigen p53 (tp53).